Here is a 464-residue protein sequence, read N- to C-terminus: MTFRIEKDTMGEVQVPADKYWAAQTERSRNNFKIGPEASMPKEIIEAFGYLKKAAAYANHDLGVLPVEKRDLIAQACDEILANKLDDQFPLVIWQTGSGTQSNMNLNEVISNRAHVLNGGKLGEKSIIHPNDDVNKSQSSNDTYPTAMHIAAYKKVVEVTIPCVERLQKTLAQKADAFKDVVKIGRTHLMDATPLTLGQEFSAYAAQLDFGLRALKNTLPHLAQLALGGTAVGTGLNTPKGYDVKVADYIAKFTGLPFITAENKFEALATHDAVVETHGALKQLAVSLYKIANDIRLLASGPRSGIGEILIPENEPGSSIMPGKVNPTQCEAMTMVCAQVLGNDTTISFAGTQGHFQLNVFKPVMAANFLQSAQLLADACVSFDEHCAVGIEPNFPRIKKQLDDSLMLVTALNTHIGYENAAKIAKTAHKNGTTLKEEAINLGLVTAEQFDEWVRPEDMVGSLK.

Residues 98–100 (SGT), 129–132 (HPND), 139–141 (SSN), and Thr-187 each bind substrate. His-188 functions as the Proton donor/acceptor in the catalytic mechanism. The active site involves Ser-318. Substrate-binding positions include Ser-319 and 324–326 (KVN).

The protein belongs to the class-II fumarase/aspartase family. Fumarase subfamily. In terms of assembly, homotetramer.

Its subcellular location is the cytoplasm. It catalyses the reaction (S)-malate = fumarate + H2O. Its pathway is carbohydrate metabolism; tricarboxylic acid cycle; (S)-malate from fumarate: step 1/1. Involved in the TCA cycle. Catalyzes the stereospecific interconversion of fumarate to L-malate. This chain is Fumarate hydratase class II, found in Pasteurella multocida (strain Pm70).